A 358-amino-acid chain; its full sequence is 3-dehydroquinate synthase (358 aa).

Residues 70–75, 104–108, 128–129, lysine 141, lysine 150, and 168–171 contribute to the NAD(+) site; these read DGEQFK, GVIGD, TT, and CLHT. Residues glutamate 183, histidine 246, and histidine 263 each contribute to the Zn(2+) site.

It belongs to the sugar phosphate cyclases superfamily. Dehydroquinate synthase family. The cofactor is Co(2+). Requires Zn(2+) as cofactor. NAD(+) serves as cofactor.

Its subcellular location is the cytoplasm. The catalysed reaction is 7-phospho-2-dehydro-3-deoxy-D-arabino-heptonate = 3-dehydroquinate + phosphate. It participates in metabolic intermediate biosynthesis; chorismate biosynthesis; chorismate from D-erythrose 4-phosphate and phosphoenolpyruvate: step 2/7. In terms of biological role, catalyzes the conversion of 3-deoxy-D-arabino-heptulosonate 7-phosphate (DAHP) to dehydroquinate (DHQ). The polypeptide is 3-dehydroquinate synthase (Shewanella baltica (strain OS155 / ATCC BAA-1091)).